The primary structure comprises 316 residues: Methionyl-tRNA formyltransferase (316 aa).

(6S)-5,6,7,8-tetrahydrofolate is bound at residue 110–113 (SLLP).

Belongs to the Fmt family.

It catalyses the reaction L-methionyl-tRNA(fMet) + (6R)-10-formyltetrahydrofolate = N-formyl-L-methionyl-tRNA(fMet) + (6S)-5,6,7,8-tetrahydrofolate + H(+). In terms of biological role, attaches a formyl group to the free amino group of methionyl-tRNA(fMet). The formyl group appears to play a dual role in the initiator identity of N-formylmethionyl-tRNA by promoting its recognition by IF2 and preventing the misappropriation of this tRNA by the elongation apparatus. This is Methionyl-tRNA formyltransferase from Bacillus licheniformis (strain ATCC 14580 / DSM 13 / JCM 2505 / CCUG 7422 / NBRC 12200 / NCIMB 9375 / NCTC 10341 / NRRL NRS-1264 / Gibson 46).